Consider the following 251-residue polypeptide: Triosephosphate isomerase (251 aa).

Substrate is bound at residue 9–11; the sequence is NWK. The active-site Electrophile is His94. Catalysis depends on Glu166, which acts as the Proton acceptor. Residues Gly172, Ser211, and 232-233 each bind substrate; that span reads GG.

It belongs to the triosephosphate isomerase family. As to quaternary structure, homodimer.

Its subcellular location is the cytoplasm. It catalyses the reaction D-glyceraldehyde 3-phosphate = dihydroxyacetone phosphate. It functions in the pathway carbohydrate biosynthesis; gluconeogenesis. The protein operates within carbohydrate degradation; glycolysis; D-glyceraldehyde 3-phosphate from glycerone phosphate: step 1/1. Its function is as follows. Involved in the gluconeogenesis. Catalyzes stereospecifically the conversion of dihydroxyacetone phosphate (DHAP) to D-glyceraldehyde-3-phosphate (G3P). The protein is Triosephosphate isomerase of Xanthomonas oryzae pv. oryzae (strain MAFF 311018).